The sequence spans 131 residues: Large ribosomal subunit protein bL17 (131 aa).

It belongs to the bacterial ribosomal protein bL17 family. Part of the 50S ribosomal subunit. Contacts protein L32.

The sequence is that of Large ribosomal subunit protein bL17 from Shewanella oneidensis (strain ATCC 700550 / JCM 31522 / CIP 106686 / LMG 19005 / NCIMB 14063 / MR-1).